A 379-amino-acid chain; its full sequence is Cytochrome b (379 aa).

Helical transmembrane passes span 33-53, 77-98, 113-133, and 178-198; these read FGSL…FLAM, WLIR…FIHV, WNIG…GYVL, and FFAF…VHLL. Positions 83 and 97 each coordinate heme b. Residues His-182 and His-196 each coordinate heme b. His-201 serves as a coordination point for a ubiquinone. The next 4 membrane-spanning stretches (helical) occupy residues 226–246, 288–308, 320–340, and 347–367; these read IKDL…ALFF, LGGV…PLLN, ITQT…WIGG, and FTTI…ILMP.

Belongs to the cytochrome b family. As to quaternary structure, the cytochrome bc1 complex contains 11 subunits: 3 respiratory subunits (MT-CYB, CYC1 and UQCRFS1), 2 core proteins (UQCRC1 and UQCRC2) and 6 low-molecular weight proteins (UQCRH/QCR6, UQCRB/QCR7, UQCRQ/QCR8, UQCR10/QCR9, UQCR11/QCR10 and a cleavage product of UQCRFS1). This cytochrome bc1 complex then forms a dimer. It depends on heme b as a cofactor.

Its subcellular location is the mitochondrion inner membrane. Its function is as follows. Component of the ubiquinol-cytochrome c reductase complex (complex III or cytochrome b-c1 complex) that is part of the mitochondrial respiratory chain. The b-c1 complex mediates electron transfer from ubiquinol to cytochrome c. Contributes to the generation of a proton gradient across the mitochondrial membrane that is then used for ATP synthesis. This is Cytochrome b (MT-CYB) from Akodon affinis (Colombian grass mouse).